A 75-amino-acid polypeptide reads, in one-letter code: uncharacterized protein (75 aa).

Positions Met-1–Ala-18 are cleaved as a signal peptide.

This is an uncharacterized protein from Treponema pallidum (strain Nichols).